The following is a 352-amino-acid chain: Biotin synthase (352 aa).

The Radical SAM core domain occupies 41–268 (NEVQVSTLLS…ASHVRLSAGR (228 aa)). The [4Fe-4S] cluster site is built by cysteine 56, cysteine 60, and cysteine 63. [2Fe-2S] cluster is bound by residues cysteine 100, cysteine 131, cysteine 191, and arginine 263.

It belongs to the radical SAM superfamily. Biotin synthase family. In terms of assembly, homodimer. Requires [4Fe-4S] cluster as cofactor. It depends on [2Fe-2S] cluster as a cofactor.

It carries out the reaction (4R,5S)-dethiobiotin + (sulfur carrier)-SH + 2 reduced [2Fe-2S]-[ferredoxin] + 2 S-adenosyl-L-methionine = (sulfur carrier)-H + biotin + 2 5'-deoxyadenosine + 2 L-methionine + 2 oxidized [2Fe-2S]-[ferredoxin]. It participates in cofactor biosynthesis; biotin biosynthesis; biotin from 7,8-diaminononanoate: step 2/2. In terms of biological role, catalyzes the conversion of dethiobiotin (DTB) to biotin by the insertion of a sulfur atom into dethiobiotin via a radical-based mechanism. The sequence is that of Biotin synthase from Marinobacter nauticus (strain ATCC 700491 / DSM 11845 / VT8) (Marinobacter aquaeolei).